Here is a 141-residue protein sequence, read N- to C-terminus: Putative antirestriction protein YubI (141 aa).

This sequence belongs to the antirestriction protein family.

The sequence is that of Putative antirestriction protein YubI (yubI) from Escherichia coli (strain K12).